Here is a 316-residue protein sequence, read N- to C-terminus: D-alanine--D-alanine ligase (316 aa).

The ATP-grasp domain occupies 109–304; the sequence is KRLWRGMDLP…FDEMVLQILA (196 aa). ATP is bound at residue 135–190; that stretch reads AADLGLPLIVKPAREGSSLGMMKVESIEALQSAYREAVIFDTAVFAERWLPGAEYT. Residues Asp258, Glu271, and Asn273 each coordinate Mg(2+).

Belongs to the D-alanine--D-alanine ligase family. The cofactor is Mg(2+). Requires Mn(2+) as cofactor.

The protein localises to the cytoplasm. The enzyme catalyses 2 D-alanine + ATP = D-alanyl-D-alanine + ADP + phosphate + H(+). It functions in the pathway cell wall biogenesis; peptidoglycan biosynthesis. Functionally, cell wall formation. The sequence is that of D-alanine--D-alanine ligase from Nitrosococcus oceani (strain ATCC 19707 / BCRC 17464 / JCM 30415 / NCIMB 11848 / C-107).